A 226-amino-acid chain; its full sequence is Large ribosomal subunit protein uL1 (226 aa).

Belongs to the universal ribosomal protein uL1 family. Part of the 50S ribosomal subunit.

Binds directly to 23S rRNA. Probably involved in E site tRNA release. Its function is as follows. Protein L1 is also a translational repressor protein, it controls the translation of its operon by binding to its mRNA. This chain is Large ribosomal subunit protein uL1, found in Korarchaeum cryptofilum (strain OPF8).